Consider the following 353-residue polypeptide: Uroporphyrinogen decarboxylase (353 aa).

Substrate is bound by residues R33–R37, D82, Y158, S213, and H332.

It belongs to the uroporphyrinogen decarboxylase family. In terms of assembly, homodimer.

It localises to the cytoplasm. It carries out the reaction uroporphyrinogen III + 4 H(+) = coproporphyrinogen III + 4 CO2. Its pathway is porphyrin-containing compound metabolism; protoporphyrin-IX biosynthesis; coproporphyrinogen-III from 5-aminolevulinate: step 4/4. In terms of biological role, catalyzes the decarboxylation of four acetate groups of uroporphyrinogen-III to yield coproporphyrinogen-III. This chain is Uroporphyrinogen decarboxylase, found in Gluconobacter oxydans (strain 621H) (Gluconobacter suboxydans).